We begin with the raw amino-acid sequence, 359 residues long: Peptide chain release factor 1 (359 aa).

At Q235 the chain carries N5-methylglutamine.

This sequence belongs to the prokaryotic/mitochondrial release factor family. In terms of processing, methylated by PrmC. Methylation increases the termination efficiency of RF1.

It is found in the cytoplasm. In terms of biological role, peptide chain release factor 1 directs the termination of translation in response to the peptide chain termination codons UAG and UAA. The sequence is that of Peptide chain release factor 1 from Anaplasma marginale (strain Florida).